Here is a 243-residue protein sequence, read N- to C-terminus: MKMHIARDSIVFLLNKHLQNTILTNKIEQECFLQADTPKKYLQYIKPFLINCMTKNITTDLVMKDSKRLEPYIILEMRDIIQMMFFRTLQKHMFFKEHTDLCTEYAQKIEASCYHYTYQQQEKTFLEEYSTRCGTINHIINCEKKSHQQQDNDALNKLISGELKPEAIGSMTFAELCPSAALKEKTEITLRSQQKVAEKTSQLYKCPNCKQRMCTYREVQTRALDEPSTIFCTCKKCGHEFIG.

Positions 77–201 constitute a TFIIS central domain; sequence MRDIIQMMFF…SQQKVAEKTS (125 aa). The TFIIS-type zinc-finger motif lies at 202–242; sequence QLYKCPNCKQRMCTYREVQTRALDEPSTIFCTCKKCGHEFI. Zn(2+) is bound by residues Cys-206, Cys-209, Cys-234, and Cys-237.

It belongs to the TFS-II family.

Putative initiation factor. Necessary for efficient transcription elongation past template-encoded arresting sites. This chain is Transcription factor TFIIS homolog, found in Ornithodoros (relapsing fever ticks).